A 263-amino-acid chain; its full sequence is Phosphonates import ATP-binding protein PhnC 1 (263 aa).

The region spanning 3–248 is the ABC transporter domain; sequence IQVENLWVAF…KEKELYFGEK (246 aa). 37–44 is an ATP binding site; it reads GPSGAGKS.

It belongs to the ABC transporter superfamily. Phosphonates importer (TC 3.A.1.9.1) family. The complex is composed of two ATP-binding proteins (PhnC), two transmembrane proteins (PhnE) and a solute-binding protein (PhnD).

It localises to the cell inner membrane. The catalysed reaction is phosphonate(out) + ATP + H2O = phosphonate(in) + ADP + phosphate + H(+). Part of the ABC transporter complex PhnCDE involved in phosphonates import. Responsible for energy coupling to the transport system. This is Phosphonates import ATP-binding protein PhnC 1 from Synechococcus sp. (strain JA-2-3B'a(2-13)) (Cyanobacteria bacterium Yellowstone B-Prime).